The chain runs to 229 residues: Urease accessory protein UreF (229 aa).

Belongs to the UreF family. In terms of assembly, ureD, UreF and UreG form a complex that acts as a GTP-hydrolysis-dependent molecular chaperone, activating the urease apoprotein by helping to assemble the nickel containing metallocenter of UreC. The UreE protein probably delivers the nickel.

Its subcellular location is the cytoplasm. Its function is as follows. Required for maturation of urease via the functional incorporation of the urease nickel metallocenter. This chain is Urease accessory protein UreF, found in Staphylococcus epidermidis (strain ATCC 35984 / DSM 28319 / BCRC 17069 / CCUG 31568 / BM 3577 / RP62A).